The chain runs to 399 residues: MTRRLFTSESVTEGHPDKIADQISDGILDALLAEDPRSRVAVETLITTGQVHVAGEVTTGAYADIPAIVRRTILDIGYDSSRKGFDGASCGVSVSIGSQSADIAQGVDNAFELRTGASESALDAQGAGDQGMMFGFACSETPELMPMPIALAHRLSRRLAQVRREGVVPYLRPDGKTQVTVEYEGLRPVRLNTVLVSSQHAADVSLDSLLTPDIRDHVIAPEVEGLGLGLDVEDYRLLVNPTGRFEVGGPMGDAGLTGRKIIVDTYGGYARHGGGAFSGKDPSKVDRSAAYAMRWVAKNVVAAGLAERCEAQVAYAIGKAHPVSLFVETFGTETVPVERIEKAVTEVFDLRPAAIIRDLQLLRPIYSQTAAYGHFGRELPDFTWESTDRAADLKSVAGA.

Histidine 15 is an ATP binding site. Aspartate 17 serves as a coordination point for Mg(2+). Glutamate 43 is a binding site for K(+). Glutamate 56 and glutamine 99 together coordinate L-methionine. Residues 99-109 (QSADIAQGVDN) form a flexible loop region. Residues 174 to 176 (DGK), 244 to 245 (RF), aspartate 253, 259 to 260 (RK), alanine 276, and lysine 280 each bind ATP. L-methionine is bound at residue aspartate 253. Lysine 284 lines the L-methionine pocket.

Belongs to the AdoMet synthase family. As to quaternary structure, homotetramer; dimer of dimers. The cofactor is Mg(2+). Requires K(+) as cofactor.

Its subcellular location is the cytoplasm. The enzyme catalyses L-methionine + ATP + H2O = S-adenosyl-L-methionine + phosphate + diphosphate. Its pathway is amino-acid biosynthesis; S-adenosyl-L-methionine biosynthesis; S-adenosyl-L-methionine from L-methionine: step 1/1. Its function is as follows. Catalyzes the formation of S-adenosylmethionine (AdoMet) from methionine and ATP. The overall synthetic reaction is composed of two sequential steps, AdoMet formation and the subsequent tripolyphosphate hydrolysis which occurs prior to release of AdoMet from the enzyme. The sequence is that of S-adenosylmethionine synthase from Salinispora arenicola (strain CNS-205).